Consider the following 126-residue polypeptide: Putative lipoprotein LprD (126 aa).

The signal sequence occupies residues methionine 1–glycine 21. The N-palmitoyl cysteine moiety is linked to residue cysteine 22. A lipid anchor (S-diacylglycerol cysteine) is attached at cysteine 22. The chain crosses the membrane as a helical span at residues phenylalanine 40 to tyrosine 60. The interval proline 70 to proline 101 is disordered.

This sequence to M.leprae ML1177.

It is found in the cell membrane. This is Putative lipoprotein LprD (lprD) from Mycobacterium tuberculosis (strain CDC 1551 / Oshkosh).